A 340-amino-acid chain; its full sequence is Phospho-N-acetylmuramoyl-pentapeptide-transferase (340 aa).

10 helical membrane-spanning segments follow: residues 3 to 23 (MSLI…PHFI), 53 to 73 (GGTV…FHVF), 79 to 99 (AYGA…IGFL), 119 to 139 (MALQ…PSGT), 144 to 164 (IGGL…FWIV), 176 to 196 (IDGL…IIAF), 200 to 220 (ELAI…FFVF), 227 to 247 (VFMG…ISIA), 250 to 270 (VEWT…SVML), and 315 to 335 (VDAF…WMVL).

This sequence belongs to the glycosyltransferase 4 family. MraY subfamily. Mg(2+) serves as cofactor.

The protein resides in the cell membrane. It carries out the reaction UDP-N-acetyl-alpha-D-muramoyl-L-alanyl-gamma-D-glutamyl-L-lysyl-D-alanyl-D-alanine + di-trans,octa-cis-undecaprenyl phosphate = Mur2Ac(oyl-L-Ala-gamma-D-Glu-L-Lys-D-Ala-D-Ala)-di-trans,octa-cis-undecaprenyl diphosphate + UMP. Its pathway is cell wall biogenesis; peptidoglycan biosynthesis. In terms of biological role, catalyzes the initial step of the lipid cycle reactions in the biosynthesis of the cell wall peptidoglycan: transfers peptidoglycan precursor phospho-MurNAc-pentapeptide from UDP-MurNAc-pentapeptide onto the lipid carrier undecaprenyl phosphate, yielding undecaprenyl-pyrophosphoryl-MurNAc-pentapeptide, known as lipid I. The protein is Phospho-N-acetylmuramoyl-pentapeptide-transferase of Streptococcus thermophilus (strain CNRZ 1066).